A 497-amino-acid chain; its full sequence is tRNA-2-methylthio-N(6)-dimethylallyladenosine synthase (497 aa).

The MTTase N-terminal domain occupies 4 to 120 (RSYEVRTFGC…LPVLLERARH (117 aa)). The [4Fe-4S] cluster site is built by cysteine 13, cysteine 49, cysteine 83, cysteine 157, cysteine 161, and cysteine 164. The 232-residue stretch at 143–374 (RASHHSAWVS…ALQDEVSWAQ (232 aa)) folds into the Radical SAM core domain. A TRAM domain is found at 376 to 445 (RELVGRRVEL…PHHLTADGPL (70 aa)).

The protein belongs to the methylthiotransferase family. MiaB subfamily. In terms of assembly, monomer. [4Fe-4S] cluster is required as a cofactor.

The protein resides in the cytoplasm. It catalyses the reaction N(6)-dimethylallyladenosine(37) in tRNA + (sulfur carrier)-SH + AH2 + 2 S-adenosyl-L-methionine = 2-methylsulfanyl-N(6)-dimethylallyladenosine(37) in tRNA + (sulfur carrier)-H + 5'-deoxyadenosine + L-methionine + A + S-adenosyl-L-homocysteine + 2 H(+). Catalyzes the methylthiolation of N6-(dimethylallyl)adenosine (i(6)A), leading to the formation of 2-methylthio-N6-(dimethylallyl)adenosine (ms(2)i(6)A) at position 37 in tRNAs that read codons beginning with uridine. The polypeptide is tRNA-2-methylthio-N(6)-dimethylallyladenosine synthase (Frankia alni (strain DSM 45986 / CECT 9034 / ACN14a)).